A 225-amino-acid polypeptide reads, in one-letter code: MRAAVAHRILLSLALFAVLCRCDPDLLFDYCVADTAAATAAGAFHLNGLACIDPALARADHFATSALSRATNPAATLYGFNATLTSPAASLPGANAQGLAMARIDLAPGGMAPPHSHPRASEAALVLSGSVLVGFADTSYRLYTQLLRAGEAFVFPRAMVHFLYNMDTAAPAVVLSGLNSQSPGAQLVPFSAFRTEPRLPDEVLKKAFKITGQDVQRIQKHLGGL.

An N-terminal signal peptide occupies residues 1-22; the sequence is MRAAVAHRILLSLALFAVLCRC. Cysteine 31 and cysteine 51 are oxidised to a cystine. One can recognise a Cupin type-1 domain in the interval 65 to 216; sequence SALSRATNPA…AFKITGQDVQ (152 aa). A glycan (N-linked (GlcNAc...) asparagine) is linked at asparagine 81. Mn(2+) contacts are provided by histidine 115, histidine 117, glutamate 122, and histidine 161.

The protein belongs to the germin family. In terms of assembly, oligomer (believed to be a pentamer but probably hexamer).

It localises to the secreted. The protein localises to the extracellular space. The protein resides in the apoplast. Its function is as follows. May play a role in plant defense. Probably has no oxalate oxidase activity even if the active site is conserved. The sequence is that of Germin-like protein 3-1 from Oryza sativa subsp. japonica (Rice).